A 1122-amino-acid polypeptide reads, in one-letter code: DNA polymerase (1122 aa).

It belongs to the DNA polymerase type-B family. As to quaternary structure, heterodimer with the terminal protein; this heterodimer binds to bp 9 to 18 of the genome. Forms a complex with viral pTP, DBP and hosts NFIA and POU2F1/OCT1 for initiation of replication.

It is found in the host nucleus. The enzyme catalyses DNA(n) + a 2'-deoxyribonucleoside 5'-triphosphate = DNA(n+1) + diphosphate. Its function is as follows. Eukaryotic-type DNA polymerase involved in viral genomic replication. DNA synthesis is protein primed, and acts in a strand displacement replication. Assembles in complex with viral pTP, DBP, host NFIA and host POU2F1/OCT1 on viral origin of replication. The polymerase covalently transfers dCMP onto pTP, thereby initiating complementary strand synthesis. The sequence is that of DNA polymerase from Human adenovirus B serotype 7 (HAdV-7).